The chain runs to 557 residues: Phosphomethylpyrimidine synthase (557 aa).

Residues N197, M226, Y255, H291, 311 to 313 (SRG), 352 to 355 (DGLR), and E391 contribute to the substrate site. H395 lines the Zn(2+) pocket. Y418 contributes to the substrate binding site. Position 459 (H459) interacts with Zn(2+). [4Fe-4S] cluster contacts are provided by C539, C542, and C547.

This sequence belongs to the ThiC family. As to quaternary structure, homodimer. The cofactor is [4Fe-4S] cluster.

The enzyme catalyses 5-amino-1-(5-phospho-beta-D-ribosyl)imidazole + S-adenosyl-L-methionine = 4-amino-2-methyl-5-(phosphooxymethyl)pyrimidine + CO + 5'-deoxyadenosine + formate + L-methionine + 3 H(+). It functions in the pathway cofactor biosynthesis; thiamine diphosphate biosynthesis. Its function is as follows. Catalyzes the synthesis of the hydroxymethylpyrimidine phosphate (HMP-P) moiety of thiamine from aminoimidazole ribotide (AIR) in a radical S-adenosyl-L-methionine (SAM)-dependent reaction. The polypeptide is Phosphomethylpyrimidine synthase (Anaplasma phagocytophilum (strain HZ)).